A 927-amino-acid chain; its full sequence is Phospholipase D beta 2 (927 aa).

One can recognise a C2 domain in the interval Pro104–Tyr237. Asp299 contacts Ca(2+). Residues Thr439 to Arg474 form the PLD phosphodiesterase 1 domain. Catalysis depends on residues His444, Lys446, and Asp451. An a 1,2-diacyl-sn-glycero-3-phosphate-binding site is contributed by His444. Residues His480 and His512 each coordinate Ca(2+). Residues Gln640 and His778 each coordinate a 1,2-diacyl-sn-glycero-3-phosphate. One can recognise a PLD phosphodiesterase 2 domain in the interval Phe773–Ser800. Active-site residues include His778, Lys780, and Asp785. Glu841 contacts Ca(2+).

This sequence belongs to the phospholipase D family. C2-PLD subfamily. The cofactor is Ca(2+). In terms of tissue distribution, expressed in stems, and to a lower amount in leaves, flowers and siliques.

It localises to the cytoplasm. It is found in the membrane. The catalysed reaction is a 1,2-diacyl-sn-glycero-3-phosphocholine + H2O = a 1,2-diacyl-sn-glycero-3-phosphate + choline + H(+). With respect to regulation, inhibited by neomycin. Hydrolyzes glycerol-phospholipids at the terminal phosphodiesteric bond to generate phosphatidic acids (PA). Plays an important role in various cellular processes, including phytohormone action, vesicular trafficking, secretion, cytoskeletal arrangement, meiosis, tumor promotion, pathogenesis, membrane deterioration and senescence. Can use phosphatidylserine or N-acylphosphatidylethanolamine as substrates. The polypeptide is Phospholipase D beta 2 (Arabidopsis thaliana (Mouse-ear cress)).